The chain runs to 273 residues: Large ribosomal subunit protein uL2 (273 aa).

The disordered stretch occupies residues 228-273; sequence VDHPHGGGEGKTSGGRHPVTPWGFPTKGKKTRKNKRTSKFIVKKRK. The span at 254-273 shows a compositional bias: basic residues; it reads KGKKTRKNKRTSKFIVKKRK.

Belongs to the universal ribosomal protein uL2 family. Part of the 50S ribosomal subunit. Forms a bridge to the 30S subunit in the 70S ribosome.

One of the primary rRNA binding proteins. Required for association of the 30S and 50S subunits to form the 70S ribosome, for tRNA binding and peptide bond formation. It has been suggested to have peptidyltransferase activity; this is somewhat controversial. Makes several contacts with the 16S rRNA in the 70S ribosome. In Rickettsia africae (strain ESF-5), this protein is Large ribosomal subunit protein uL2.